Reading from the N-terminus, the 486-residue chain is Protein DETOXIFICATION 53 (486 aa).

12 consecutive transmembrane segments (helical) span residues C15–L35, G45–S65, L94–L114, M130–L150, L159–V179, G187–T207, A240–L260, V267–I287, V312–L332, I346–P366, V386–F406, and L413–I433. Positions T448–S474 are disordered. Positions D453 to V466 are enriched in basic and acidic residues.

This sequence belongs to the multi antimicrobial extrusion (MATE) (TC 2.A.66.1) family.

It localises to the membrane. The protein is Protein DETOXIFICATION 53 of Arabidopsis thaliana (Mouse-ear cress).